A 124-amino-acid chain; its full sequence is Small ribosomal subunit protein uS12 (124 aa).

Position 89 is a 3-methylthioaspartic acid (D89).

The protein belongs to the universal ribosomal protein uS12 family. As to quaternary structure, part of the 30S ribosomal subunit. Contacts proteins S8 and S17. May interact with IF1 in the 30S initiation complex.

With S4 and S5 plays an important role in translational accuracy. Its function is as follows. Interacts with and stabilizes bases of the 16S rRNA that are involved in tRNA selection in the A site and with the mRNA backbone. Located at the interface of the 30S and 50S subunits, it traverses the body of the 30S subunit contacting proteins on the other side and probably holding the rRNA structure together. The combined cluster of proteins S8, S12 and S17 appears to hold together the shoulder and platform of the 30S subunit. The sequence is that of Small ribosomal subunit protein uS12 from Erwinia amylovora (Fire blight bacteria).